The following is a 217-amino-acid chain: Large ribosomal subunit protein uL3 (217 aa).

Residues 127-162 (GFSRGPMSHGSKNHRAPGSTGAGTTPGRIYPGKRMA) form a disordered region. The segment covering 142–153 (APGSTGAGTTPG) has biased composition (low complexity).

Belongs to the universal ribosomal protein uL3 family. In terms of assembly, part of the 50S ribosomal subunit. Forms a cluster with proteins L14 and L19.

In terms of biological role, one of the primary rRNA binding proteins, it binds directly near the 3'-end of the 23S rRNA, where it nucleates assembly of the 50S subunit. The sequence is that of Large ribosomal subunit protein uL3 from Prochlorococcus marinus (strain AS9601).